An 880-amino-acid polypeptide reads, in one-letter code: Valine--tRNA ligase (880 aa).

Positions 51 to 61 (PNVTGELHLGH) match the 'HIGH' region motif. Residues 529-533 (KMSKT) carry the 'KMSKS' region motif. An ATP-binding site is contributed by Lys-532. Positions 815-854 (MSTMVDLEAEAKRVEAEIAELETQIERLSARLSDTQFLAK) form a coiled coil.

It belongs to the class-I aminoacyl-tRNA synthetase family. ValS type 1 subfamily. In terms of assembly, monomer.

The protein resides in the cytoplasm. The enzyme catalyses tRNA(Val) + L-valine + ATP = L-valyl-tRNA(Val) + AMP + diphosphate. Functionally, catalyzes the attachment of valine to tRNA(Val). As ValRS can inadvertently accommodate and process structurally similar amino acids such as threonine, to avoid such errors, it has a 'posttransfer' editing activity that hydrolyzes mischarged Thr-tRNA(Val) in a tRNA-dependent manner. The sequence is that of Valine--tRNA ligase from Dehalococcoides mccartyi (strain ATCC BAA-2266 / KCTC 15142 / 195) (Dehalococcoides ethenogenes (strain 195)).